Consider the following 81-residue polypeptide: Probable antitoxin MazE2 (81 aa).

In terms of assembly, forms a complex with cognate toxin MazF2.

In terms of biological role, antitoxin component of a type II toxin-antitoxin (TA) system. This Mycobacterium tuberculosis (strain ATCC 25618 / H37Rv) protein is Probable antitoxin MazE2 (mazE2).